A 139-amino-acid chain; its full sequence is Putative pre-16S rRNA nuclease (139 aa).

This sequence belongs to the YqgF nuclease family.

The protein localises to the cytoplasm. In terms of biological role, could be a nuclease involved in processing of the 5'-end of pre-16S rRNA. This chain is Putative pre-16S rRNA nuclease, found in Pectobacterium atrosepticum (strain SCRI 1043 / ATCC BAA-672) (Erwinia carotovora subsp. atroseptica).